The primary structure comprises 288 residues: Alpha/beta hydrolase domain-containing protein 17B (288 aa).

Catalysis depends on charge relay system residues Ser-170, Asp-235, and His-264. Ser-282 is modified (phosphoserine).

It belongs to the AB hydrolase superfamily. ABHD17 family. In terms of processing, palmitoylated on cysteine residues located in a cysteine cluster at the N-terminus which promotes membrane localization. Palmitoylation is required for post-synaptic localization and for depalmitoylating activity towards DLG4/PSD95. Expressed in brain.

Its subcellular location is the cell membrane. It localises to the recycling endosome membrane. The protein resides in the cell projection. The protein localises to the dendritic spine. It is found in the postsynaptic density membrane. The enzyme catalyses S-hexadecanoyl-L-cysteinyl-[protein] + H2O = L-cysteinyl-[protein] + hexadecanoate + H(+). Functionally, hydrolyzes fatty acids from S-acylated cysteine residues in proteins. Has depalmitoylating activity towards DLG4/PSD95. Has depalmitoylating activity towards GAP43. Has depalmitoylating activity towards MAP6. Has depalmitoylating activity towards NRAS. The polypeptide is Alpha/beta hydrolase domain-containing protein 17B (Mus musculus (Mouse)).